The following is a 42-amino-acid chain: Potassium channel toxin gamma-KTx 1.4 (42 aa).

4 disulfide bridges follow: Cys-5–Cys-23, Cys-11–Cys-34, Cys-20–Cys-39, and Cys-24–Cys-41.

This sequence belongs to the ergtoxin family. Gamma-KTx 1 subfamily. In terms of tissue distribution, expressed by the venom gland.

The protein resides in the secreted. Its function is as follows. Blocks Kv11/ERG potassium channels. This is Potassium channel toxin gamma-KTx 1.4 from Centruroides sculpturatus (Arizona bark scorpion).